The following is a 103-amino-acid chain: Large ribosomal subunit protein uL24 (103 aa).

It belongs to the universal ribosomal protein uL24 family. As to quaternary structure, part of the 50S ribosomal subunit.

Its function is as follows. One of two assembly initiator proteins, it binds directly to the 5'-end of the 23S rRNA, where it nucleates assembly of the 50S subunit. In terms of biological role, one of the proteins that surrounds the polypeptide exit tunnel on the outside of the subunit. In Geobacillus stearothermophilus (Bacillus stearothermophilus), this protein is Large ribosomal subunit protein uL24.